We begin with the raw amino-acid sequence, 172 residues long: uncharacterized protein (172 aa).

The tract at residues 130 to 154 (EQEKGAAPQEGKDWQVISEEDKKNQ) is disordered.

This is an uncharacterized protein from Bacillus subtilis (strain 168).